Reading from the N-terminus, the 354-residue chain is Probable butyrate kinase 2 (354 aa).

It belongs to the acetokinase family.

The protein resides in the cytoplasm. It catalyses the reaction butanoate + ATP = butanoyl phosphate + ADP. This chain is Probable butyrate kinase 2, found in Caldanaerobacter subterraneus subsp. tengcongensis (strain DSM 15242 / JCM 11007 / NBRC 100824 / MB4) (Thermoanaerobacter tengcongensis).